The chain runs to 452 residues: Bifunctional F420 biosynthesis protein FbiB (452 aa).

The interval 1 to 248 (MVSAPGDHAG…AGEEDLFWLG (248 aa)) is coenzyme F420:L-glutamate ligase. GTP-binding positions include 24–27 (LPEF), S54, and K59. D113 contributes to the a divalent metal cation binding site. N116 serves as a coordination point for GTP. Residues D154 and T155 each coordinate a divalent metal cation. Positions 249 to 452 (TAEAVERGRR…RDPGDGLVER (204 aa)) are dehydro-coenzyme F420-0 reductase. FMN contacts are provided by residues 264–268 (RRSVR) and A292. Residue D324 participates in coenzyme F420-(gamma-Glu)n binding. G403 and R440 together coordinate FMN.

This sequence in the N-terminal section; belongs to the CofE family. Requires Mg(2+) as cofactor. The cofactor is Mn(2+). K(+) serves as cofactor.

The catalysed reaction is oxidized coenzyme F420-0 + GTP + L-glutamate = oxidized coenzyme F420-1 + GDP + phosphate + H(+). It carries out the reaction oxidized coenzyme F420-0 + FMN + H(+) = dehydro coenzyme F420-0 + FMNH2. The enzyme catalyses oxidized coenzyme F420-1 + GTP + L-glutamate = oxidized coenzyme F420-2 + GDP + phosphate + H(+). The protein operates within cofactor biosynthesis; coenzyme F420 biosynthesis. In terms of biological role, bifunctional enzyme that catalyzes the GTP-dependent successive addition of two or more gamma-linked L-glutamates to the L-lactyl phosphodiester of 7,8-didemethyl-8-hydroxy-5-deazariboflavin (F420-0) to form polyglutamated F420 derivatives, and the FMNH2-dependent reduction of dehydro-F420-0 to form F420-0. The polypeptide is Bifunctional F420 biosynthesis protein FbiB (Nocardia farcinica (strain IFM 10152)).